A 1132-amino-acid chain; its full sequence is Phosphatidylinositide phosphatase SAC2 (1132 aa).

The SAC domain maps to 167–518; sequence LKMFMDSESF…GDSISRQYAG (352 aa). The segment at 250-269 is disordered; that stretch reads ESSDDDKSSPETPPQDSTCV. A hSac2 domain is found at 593 to 760; that stretch reads RSHQELISQL…KSSKPHEDII (168 aa). A phosphoserine mark is found at Ser-714, Ser-827, and Ser-830. The tract at residues 833–872 is disordered; it reads TMENPGVMGNKVQGESDGDISSDNDSYHSDEFLTNSKSEE. Residues 857-872 are compositionally biased toward basic and acidic residues; it reads DSYHSDEFLTNSKSEE. Phosphoserine is present on residues Ser-879, Ser-882, Ser-908, and Ser-911. Polar residues-rich tracts occupy residues 908-918 and 994-1005; these read SASSIDVSTHA and RVSNEETQSEPM. Disordered regions lie at residues 908 to 951 and 981 to 1016; these read SASS…HTRT and VAQKSEEGSHKTNRVSNEETQSEPMGQTPPRPSQLN. Phosphoserine is present on Ser-1103.

In terms of assembly, homodimer. Interacts with OCRL and RAB5. Interacts with INPP5B and INPP4A. Interacts with STAT3; the interaction is independent of STAT3 'Tyr-705' phosphorylation status. In terms of tissue distribution, highly expressed in brain and hypothalamus, expressed in lung and pancreas, and detected at low levels in liver and heart (at protein level).

It is found in the membrane. The protein resides in the clathrin-coated pit. The protein localises to the early endosome. Its subcellular location is the recycling endosome. The enzyme catalyses a myo-inositol phosphate + H2O = myo-inositol + phosphate. Its function is as follows. Inositol 4-phosphatase which mainly acts on phosphatidylinositol 4-phosphate. May be functionally linked to OCRL, which converts phosphatidylinositol 4,5-bisphosphate to phosphatidylinositol, for a sequential dephosphorylation of phosphatidylinositol 4,5-bisphosphate at the 5 and 4 position of inositol, thus playing an important role in the endocytic recycling. Regulator of TF:TFRC and integrins recycling pathway, is also involved in cell migration mechanisms. Modulates AKT/GSK3B pathway by decreasing AKT and GSK3B phosphorylation. Negatively regulates STAT3 signaling pathway through inhibition of STAT3 phosphorylation and translocation to the nucleus. Functionally important modulator of cardiac myocyte size and of the cardiac response to stress. May play a role as negative regulator of axon regeneration after central nervous system injuries. In Mus musculus (Mouse), this protein is Phosphatidylinositide phosphatase SAC2.